The chain runs to 69 residues: U-Asilidin(12)-Dg3b (69 aa).

Positions 1–19 are cleaved as a signal peptide; the sequence is MRFLNIFLFFAVMIAFVSA. Positions 20 to 33 are excised as a propeptide; sequence SPVLEEEEIDIEPR. 3 disulfide bridges follow: Cys-36–Cys-59, Cys-45–Cys-65, and Cys-49–Cys-67.

It belongs to the asilidin-12 family. In terms of tissue distribution, expressed by the venom gland.

Its subcellular location is the secreted. In terms of biological role, the recombinant peptide moderately increases Kv11.1/KCNH2/ERG1 currents and shifts the voltage-dependence of the channel activation to hyperpolarised potentials. In vivo, induces neurotoxic effects when injected into insects (tested on L.cuprina and A.domesticus). The polypeptide is U-Asilidin(12)-Dg3b (Dolopus genitalis (Giant Australian assassin fly)).